A 392-amino-acid chain; its full sequence is Elongation factor Tu (392 aa).

Residues 10–202 (KVHVNVGTIG…VLDEYIEDPI (193 aa)) enclose the tr-type G domain. A G1 region spans residues 19-26 (GHVDHGKT). 19-26 (GHVDHGKT) is a GTP binding site. Position 26 (threonine 26) interacts with Mg(2+). A G2 region spans residues 60–64 (GITIN). A G3 region spans residues 81–84 (DCPG). Residues 81–85 (DCPGH) and 136–139 (NKCD) each bind GTP. The interval 136-139 (NKCD) is G4. Residues 174 to 176 (SAL) form a G5 region.

Belongs to the TRAFAC class translation factor GTPase superfamily. Classic translation factor GTPase family. EF-Tu/EF-1A subfamily. Monomer.

It is found in the cytoplasm. The enzyme catalyses GTP + H2O = GDP + phosphate + H(+). Functionally, GTP hydrolase that promotes the GTP-dependent binding of aminoacyl-tRNA to the A-site of ribosomes during protein biosynthesis. The protein is Elongation factor Tu of Phytoplasma mali (strain AT).